The following is a 120-amino-acid chain: Protein Wnt-9 (120 aa).

Ser-1 carries O-palmitoleoyl serine; by PORCN lipidation. A disulfide bond links Cys-90 and Cys-101.

It belongs to the Wnt family. In terms of processing, palmitoleoylation is required for efficient binding to frizzled receptors. Depalmitoleoylation leads to Wnt signaling pathway inhibition.

The protein localises to the secreted. The protein resides in the extracellular space. It is found in the extracellular matrix. Its function is as follows. Ligand for members of the frizzled family of seven transmembrane receptors. Probable developmental protein. May be a signaling molecule which affects the development of discrete regions of tissues. Is likely to signal over only few cell diameters. In Alopias vulpinus (Common thresher shark), this protein is Protein Wnt-9 (WNT-9).